The following is a 445-amino-acid chain: Na(+)-translocating NADH-quinone reductase subunit A (445 aa).

This sequence belongs to the NqrA family. In terms of assembly, composed of six subunits; NqrA, NqrB, NqrC, NqrD, NqrE and NqrF.

The catalysed reaction is a ubiquinone + n Na(+)(in) + NADH + H(+) = a ubiquinol + n Na(+)(out) + NAD(+). In terms of biological role, NQR complex catalyzes the reduction of ubiquinone-1 to ubiquinol by two successive reactions, coupled with the transport of Na(+) ions from the cytoplasm to the periplasm. NqrA to NqrE are probably involved in the second step, the conversion of ubisemiquinone to ubiquinol. The sequence is that of Na(+)-translocating NADH-quinone reductase subunit A from Pseudomonas aeruginosa (strain ATCC 15692 / DSM 22644 / CIP 104116 / JCM 14847 / LMG 12228 / 1C / PRS 101 / PAO1).